Consider the following 230-residue polypeptide: Thiamine-triphosphatase (230 aa).

The residue at position 2 (Ala2) is an N-acetylalanine. The CYTH domain maps to 5–201 (LIEVERKFLP…AKLIVYLQRF (197 aa)). 2 residues coordinate Mg(2+): Glu7 and Glu9. Substrate-binding residues include Lys11, Arg55, Arg57, Lys65, and Arg125. Mg(2+) contacts are provided by Asp145, Glu157, and Glu159. Glu157 contacts substrate. Lys193 serves as a coordination point for substrate.

It belongs to the ThTPase family. In terms of assembly, monomer. Mg(2+) serves as cofactor.

Its subcellular location is the cytoplasm. The enzyme catalyses thiamine triphosphate + H2O = thiamine diphosphate + phosphate + H(+). Functionally, hydrolase highly specific for thiamine triphosphate (ThTP). The sequence is that of Thiamine-triphosphatase (THTPA) from Macaca fascicularis (Crab-eating macaque).